Here is a 281-residue protein sequence, read N- to C-terminus: MATQNAILKKALIIFLFTLTIMTGTAFSQNCGTNGCKGNMCCSRWGYCGTTKAYCGTGCQSGPCNSKPKPTPTPSGSGGLNAGPRGTIASVITPAFFNSIMSKVGSGCPAKGFYTRQAFIAAAESFAAYKGTVAKREIAAMLAQFSHESGSFCYKEEIARGRYCSPSTTYPCQPGKNYYGRGPIQITWNYNYGAAGKFLGLPLLKDPDMVARSPTVAFQCAMWFWNKNVRPVLSQGFGATTRRINGGECNGGRPAAVQSRVNHYLDFCKKLGVTPGTNLSC.

A signal peptide spans 1-28 (MATQNAILKKALIIFLFTLTIMTGTAFS). Residues 29–66 (QNCGTNGCKGNMCCSRWGYCGTTKAYCGTGCQSGPCNS) enclose the Chitin-binding type-1 domain. 4 cysteine pairs are disulfide-bonded: Cys-31-Cys-42, Cys-36-Cys-48, Cys-41-Cys-55, and Cys-59-Cys-64. The segment at 86–281 (GTIASVITPA…GVTPGTNLSC (196 aa)) is catalytic. Catalysis depends on Glu-148, which acts as the Proton donor. Asn-278 carries an N-linked (GlcNAc...) asparagine glycan.

Belongs to the glycosyl hydrolase 19 family. Chitinase class I subfamily.

It carries out the reaction Random endo-hydrolysis of N-acetyl-beta-D-glucosaminide (1-&gt;4)-beta-linkages in chitin and chitodextrins.. The chain is Endochitinase At2g43610 from Arabidopsis thaliana (Mouse-ear cress).